The chain runs to 377 residues: Early estrogen-induced gene 1 protein (377 aa).

The C2 NT-type domain occupies 2 to 145; that stretch reads AFLTKKKKFK…ILKVNIGMSL (144 aa). Composition is skewed to polar residues over residues 160-173, 188-198, and 222-234; these read KTVS…SLQM, VRQNRSRQAML, and SRNS…QSKI. Residues 160–313 are disordered; that stretch reads KTVSPPGQDS…SVESQPTWVD (154 aa). Low complexity predominate over residues 256 to 269; it reads TSTSSSVSGGLSLT. Basic and acidic residues predominate over residues 274-285; the sequence is EPERDVKPEKPP.

The protein belongs to the EEIG family.

It is found in the nucleus. Its subcellular location is the cytoplasm. In terms of biological role, may be involved in osteoclast differentiation. This is Early estrogen-induced gene 1 protein (eeig1) from Xenopus laevis (African clawed frog).